Here is a 607-residue protein sequence, read N- to C-terminus: Protein PLASTID MOVEMENT IMPAIRED 2 (607 aa).

2 coiled-coil regions span residues 66–295 (KAKK…NAEL) and 329–445 (MLER…ESRR).

This sequence belongs to the WEB family. Interacts with WEB1. In terms of tissue distribution, ubiquitous but preferentially in chloroplast-containing tissues.

It localises to the cytoplasm. Its function is as follows. Required for the chloroplast avoidance response under high intensity blue light. This avoidance response consists in the relocation of chloroplasts on the anticlinal side of exposed cells. Acts in association with WEB1 to maintain the velocity of chloroplast photorelocation movement via cp-actin filaments regulation. This is Protein PLASTID MOVEMENT IMPAIRED 2 (PMI2) from Arabidopsis thaliana (Mouse-ear cress).